A 634-amino-acid chain; its full sequence is Chaperone protein HtpG (634 aa).

Residues 1–342 (MTVETDKQTL…SSDLSLNVSR (342 aa)) form an a; substrate-binding region. The segment at 343–559 (EILQSGPVVD…QGDLGLQMRQ (217 aa)) is b. The tract at residues 560 to 634 (LLEASGQAVP…LNKLLLELSV (75 aa)) is c.

This sequence belongs to the heat shock protein 90 family. Homodimer.

The protein localises to the cytoplasm. Functionally, molecular chaperone. Has ATPase activity. The sequence is that of Chaperone protein HtpG from Xanthomonas euvesicatoria pv. vesicatoria (strain 85-10) (Xanthomonas campestris pv. vesicatoria).